The primary structure comprises 390 residues: Protein-glutamate methylesterase/protein-glutamine glutaminase 1 (390 aa).

A Response regulatory domain is found at 4-121 (KVLVVDDSGF…SRNPQKVKQL (118 aa)). The residue at position 55 (D55) is a 4-aspartylphosphate. The segment covering 132–186 (SNRRSSGIGSASAASPAPAAPAPSTLSSRAPAPSAAAPARAVPSRTVAPAAAPAA) has biased composition (low complexity). The disordered stretch occupies residues 132 to 201 (SNRRSSGIGS…PAHPTTTGTA (70 aa)). The region spanning 195–387 (PTTTGTAKRK…LDDIGRHLVE (193 aa)) is the CheB-type methylesterase domain. Residues S214, H241, and D334 contribute to the active site.

The protein belongs to the CheB family. In terms of processing, phosphorylated by CheA. Phosphorylation of the N-terminal regulatory domain activates the methylesterase activity.

The protein resides in the cytoplasm. The catalysed reaction is [protein]-L-glutamate 5-O-methyl ester + H2O = L-glutamyl-[protein] + methanol + H(+). It catalyses the reaction L-glutaminyl-[protein] + H2O = L-glutamyl-[protein] + NH4(+). Functionally, involved in chemotaxis. Part of a chemotaxis signal transduction system that modulates chemotaxis in response to various stimuli. Catalyzes the demethylation of specific methylglutamate residues introduced into the chemoreceptors (methyl-accepting chemotaxis proteins or MCP) by CheR. Also mediates the irreversible deamidation of specific glutamine residues to glutamic acid. In Pseudomonas syringae pv. tomato (strain ATCC BAA-871 / DC3000), this protein is Protein-glutamate methylesterase/protein-glutamine glutaminase 1.